A 248-amino-acid chain; its full sequence is 2,3-bisphosphoglycerate-dependent phosphoglycerate mutase (248 aa).

Substrate contacts are provided by residues 8–15 (RHGESLWN), 21–22 (TG), Arg-60, 87–90 (ERHY), Lys-98, 114–115 (RR), and 183–184 (GN). Catalysis depends on His-9, which acts as the Tele-phosphohistidine intermediate. The active-site Proton donor/acceptor is Glu-87.

It belongs to the phosphoglycerate mutase family. BPG-dependent PGAM subfamily.

The catalysed reaction is (2R)-2-phosphoglycerate = (2R)-3-phosphoglycerate. Its pathway is carbohydrate degradation; glycolysis; pyruvate from D-glyceraldehyde 3-phosphate: step 3/5. Its function is as follows. Catalyzes the interconversion of 2-phosphoglycerate and 3-phosphoglycerate. This is 2,3-bisphosphoglycerate-dependent phosphoglycerate mutase from Methanospirillum hungatei JF-1 (strain ATCC 27890 / DSM 864 / NBRC 100397 / JF-1).